The following is a 185-amino-acid chain: Elongation factor P (185 aa).

This sequence belongs to the elongation factor P family.

The protein resides in the cytoplasm. It participates in protein biosynthesis; polypeptide chain elongation. Involved in peptide bond synthesis. Stimulates efficient translation and peptide-bond synthesis on native or reconstituted 70S ribosomes in vitro. Probably functions indirectly by altering the affinity of the ribosome for aminoacyl-tRNA, thus increasing their reactivity as acceptors for peptidyl transferase. In Burkholderia vietnamiensis (strain G4 / LMG 22486) (Burkholderia cepacia (strain R1808)), this protein is Elongation factor P.